A 134-amino-acid polypeptide reads, in one-letter code: Terepressin/terephysin (134 aa).

Positions 1–33 (MKCSVLPRSRLSWTMCVLLLPLLMLMLEGGVQG) are cleaved as a signal peptide. Cysteine 34 and cysteine 39 form a disulfide bridge. Positions 44–50 (KRAVDSV) are excised as a propeptide. 7 cysteine pairs are disulfide-bonded: cysteine 56–cysteine 100, cysteine 59–cysteine 73, cysteine 67–cysteine 90, cysteine 74–cysteine 80, cysteine 107–cysteine 121, cysteine 115–cysteine 133, and cysteine 122–cysteine 127.

This sequence belongs to the vasopressin/oxytocin family. Post-translationally, contains 7 disulfide bonds. Expressed by the venom duct.

It localises to the secreted. This is Terepressin/terephysin from Terebra subulata (Chocolate spotted auger).